We begin with the raw amino-acid sequence, 1039 residues long: Isoleucine--tRNA ligase (1039 aa).

A 'HIGH' region motif is present at residues proline 46–threonine 56. Positions lysine 600–serine 604 match the 'KMSKS' region motif. Lysine 603 is an ATP binding site.

This sequence belongs to the class-I aminoacyl-tRNA synthetase family. IleS type 2 subfamily. Monomer. The cofactor is Zn(2+).

It is found in the cytoplasm. The catalysed reaction is tRNA(Ile) + L-isoleucine + ATP = L-isoleucyl-tRNA(Ile) + AMP + diphosphate. Catalyzes the attachment of isoleucine to tRNA(Ile). As IleRS can inadvertently accommodate and process structurally similar amino acids such as valine, to avoid such errors it has two additional distinct tRNA(Ile)-dependent editing activities. One activity is designated as 'pretransfer' editing and involves the hydrolysis of activated Val-AMP. The other activity is designated 'posttransfer' editing and involves deacylation of mischarged Val-tRNA(Ile). The chain is Isoleucine--tRNA ligase from Methanocaldococcus jannaschii (strain ATCC 43067 / DSM 2661 / JAL-1 / JCM 10045 / NBRC 100440) (Methanococcus jannaschii).